Reading from the N-terminus, the 732-residue chain is Photosystem I P700 chlorophyll a apoprotein A2 (732 aa).

8 helical membrane-spanning segments follow: residues 46–69 (IFAS…FHVA), 133–156 (LYTG…LHIQ), 173–197 (LNHH…HVAI), 271–289 (MAHH…GHMY), 328–351 (LHFQ…QHMY), 367–393 (SALY…IFFI), 415–437 (AVIS…LYVH), and 515–533 (FLVH…LILV). Positions 557 and 566 each coordinate [4Fe-4S] cluster. The next 2 membrane-spanning stretches (helical) occupy residues 573–594 (AFYL…YWHW) and 641–663 (LAVW…MFLI). Residues histidine 652, methionine 660, and tyrosine 668 each contribute to the chlorophyll a site. Tryptophan 669 contributes to the phylloquinone binding site. A helical transmembrane segment spans residues 705-725 (LVGLVHFTVGYILTYAAFVIA).

This sequence belongs to the PsaA/PsaB family. As to quaternary structure, the PsaA/B heterodimer binds the P700 chlorophyll special pair and subsequent electron acceptors. PSI consists of a core antenna complex that captures photons, and an electron transfer chain that converts photonic excitation into a charge separation. The eukaryotic PSI reaction center is composed of at least 11 subunits. Requires P700 is a chlorophyll a/chlorophyll a' dimer, A0 is one or more chlorophyll a, A1 is one or both phylloquinones and FX is a shared 4Fe-4S iron-sulfur center. as cofactor.

The protein resides in the plastid. The protein localises to the chloroplast thylakoid membrane. The enzyme catalyses reduced [plastocyanin] + hnu + oxidized [2Fe-2S]-[ferredoxin] = oxidized [plastocyanin] + reduced [2Fe-2S]-[ferredoxin]. In terms of biological role, psaA and PsaB bind P700, the primary electron donor of photosystem I (PSI), as well as the electron acceptors A0, A1 and FX. PSI is a plastocyanin/cytochrome c6-ferredoxin oxidoreductase, converting photonic excitation into a charge separation, which transfers an electron from the donor P700 chlorophyll pair to the spectroscopically characterized acceptors A0, A1, FX, FA and FB in turn. Oxidized P700 is reduced on the lumenal side of the thylakoid membrane by plastocyanin or cytochrome c6. This is Photosystem I P700 chlorophyll a apoprotein A2 from Cyanidioschyzon merolae (strain NIES-3377 / 10D) (Unicellular red alga).